The sequence spans 283 residues: Putative transcription factor kapC (283 aa).

Residues 1-10 show a composition bias toward pro residues; it reads MQPTLAPAPH. The segment at 1-121 is disordered; it reads MQPTLAPAPH…NRAAQRAFRQ (121 aa). The span at 26–42 shows a compositional bias: low complexity; sequence HDQLLAAHQHLSHPQQA. Positions 55–67 are enriched in polar residues; that stretch reads QPNTTSPRDQNNI. Positions 102–165 constitute a bZIP domain; that stretch reads PLSTSKRAAQ…EYIINLQSRL (64 aa). The tract at residues 103-126 is basic motif; that stretch reads LSTSKRAAQNRAAQRAFRQRKESY. Over residues 108–118 the composition is skewed to low complexity; sequence RAAQNRAAQRA. The interval 130–161 is leucine-zipper; it reads LEEQVKEFDNTNETMKQLQAENYQLREYIINL. The disordered stretch occupies residues 178–283; sequence NIDLNQPRND…EPGHGLPVVS (106 aa).

Belongs to the bZIP family.

Its subcellular location is the nucleus. Its function is as follows. Putative transcription factor. The sequence is that of Putative transcription factor kapC (kapC) from Aspergillus niger (strain ATCC MYA-4892 / CBS 513.88 / FGSC A1513).